We begin with the raw amino-acid sequence, 351 residues long: Homeobox protein rough sheath 1 (351 aa).

Disordered regions lie at residues M1–A23, A57–M82, and G187–E229. Positions A57–Q68 are enriched in low complexity. Over residues P214–E229 the composition is skewed to basic and acidic residues. Residues E232–F252 form the ELK domain. The segment at residues S253 to S316 is a DNA-binding region (homeobox; TALE-type).

The protein belongs to the TALE/KNOX homeobox family.

The protein localises to the nucleus. Functionally, plays a possible role in patterning the placement of lateral organs along the axis of the shoot. Mutations in RS1 alters cell fate and causes unregulated cell division and expansion in the leaf. Probably binds to the DNA sequence 5'-TGAC-3'. The chain is Homeobox protein rough sheath 1 (RS1) from Zea mays (Maize).